The primary structure comprises 95 residues: Large ribosomal subunit protein uL23 (95 aa).

This sequence belongs to the universal ribosomal protein uL23 family. Part of the 50S ribosomal subunit. Contacts protein L29.

Its function is as follows. Binds to 23S rRNA. One of the proteins that surrounds the polypeptide exit tunnel on the outside of the ribosome. The sequence is that of Large ribosomal subunit protein uL23 from Methanopyrus kandleri (strain AV19 / DSM 6324 / JCM 9639 / NBRC 100938).